Consider the following 78-residue polypeptide: U7-lycotoxin-Ls1h (78 aa).

An N-terminal signal peptide occupies residues 1-22 (MKLIIFTGLTLLLIVSLIDVEA). A propeptide spanning residues 23–26 (QNEG) is cleaved from the precursor.

This sequence belongs to the neurotoxin 19 (CSTX) family. 07 (U7-Lctx) subfamily. In terms of processing, contains 4 disulfide bonds. In terms of tissue distribution, expressed by the venom gland.

The protein localises to the secreted. The sequence is that of U7-lycotoxin-Ls1h from Lycosa singoriensis (Wolf spider).